The following is a 466-amino-acid chain: Soluble pyridine nucleotide transhydrogenase (466 aa).

An FAD-binding site is contributed by 36 to 45 (ERYHNVGGGC).

This sequence belongs to the class-I pyridine nucleotide-disulfide oxidoreductase family. It depends on FAD as a cofactor.

Its subcellular location is the cytoplasm. It carries out the reaction NAD(+) + NADPH = NADH + NADP(+). Conversion of NADPH, generated by peripheral catabolic pathways, to NADH, which can enter the respiratory chain for energy generation. The protein is Soluble pyridine nucleotide transhydrogenase of Salmonella paratyphi A (strain ATCC 9150 / SARB42).